A 405-amino-acid polypeptide reads, in one-letter code: Glucose-1-phosphate adenylyltransferase 1 (405 aa).

Alpha-D-glucose 1-phosphate is bound by residues Y96, G161, 176 to 177 (EK), and S194.

It belongs to the bacterial/plant glucose-1-phosphate adenylyltransferase family. Homotetramer.

It carries out the reaction alpha-D-glucose 1-phosphate + ATP + H(+) = ADP-alpha-D-glucose + diphosphate. Its pathway is glycan biosynthesis; glycogen biosynthesis. In terms of biological role, involved in the biosynthesis of ADP-glucose, a building block required for the elongation reactions to produce glycogen. Catalyzes the reaction between ATP and alpha-D-glucose 1-phosphate (G1P) to produce pyrophosphate and ADP-Glc. This chain is Glucose-1-phosphate adenylyltransferase 1, found in Vibrio vulnificus (strain YJ016).